The primary structure comprises 243 residues: NAD(P)H-quinone oxidoreductase subunit K, chloroplastic (243 aa).

[4Fe-4S] cluster-binding residues include cysteine 65, cysteine 66, cysteine 130, and cysteine 161.

The protein belongs to the complex I 20 kDa subunit family. As to quaternary structure, NDH is composed of at least 16 different subunits, 5 of which are encoded in the nucleus. It depends on [4Fe-4S] cluster as a cofactor.

It localises to the plastid. Its subcellular location is the chloroplast thylakoid membrane. The catalysed reaction is a plastoquinone + NADH + (n+1) H(+)(in) = a plastoquinol + NAD(+) + n H(+)(out). It catalyses the reaction a plastoquinone + NADPH + (n+1) H(+)(in) = a plastoquinol + NADP(+) + n H(+)(out). Its function is as follows. NDH shuttles electrons from NAD(P)H:plastoquinone, via FMN and iron-sulfur (Fe-S) centers, to quinones in the photosynthetic chain and possibly in a chloroplast respiratory chain. The immediate electron acceptor for the enzyme in this species is believed to be plastoquinone. Couples the redox reaction to proton translocation, and thus conserves the redox energy in a proton gradient. This chain is NAD(P)H-quinone oxidoreductase subunit K, chloroplastic, found in Marchantia polymorpha (Common liverwort).